The following is a 681-amino-acid chain: DNA-directed RNA polymerase subunit beta' (681 aa).

Zn(2+)-binding residues include Cys69, Cys71, Cys87, and Cys90. Mg(2+) is bound by residues Asp489, Asp491, and Asp493.

The protein belongs to the RNA polymerase beta' chain family. RpoC1 subfamily. As to quaternary structure, in plastids the minimal PEP RNA polymerase catalytic core is composed of four subunits: alpha, beta, beta', and beta''. When a (nuclear-encoded) sigma factor is associated with the core the holoenzyme is formed, which can initiate transcription. The cofactor is Mg(2+). It depends on Zn(2+) as a cofactor.

It is found in the plastid. Its subcellular location is the chloroplast. It carries out the reaction RNA(n) + a ribonucleoside 5'-triphosphate = RNA(n+1) + diphosphate. Functionally, DNA-dependent RNA polymerase catalyzes the transcription of DNA into RNA using the four ribonucleoside triphosphates as substrates. The sequence is that of DNA-directed RNA polymerase subunit beta' from Nicotiana tomentosiformis (Tobacco).